The chain runs to 567 residues: Inactive protein kinase SELMODRAFT_444075 (567 aa).

The segment at 148–206 (NETRRKGPSPSEVLNSTTSSPASHKPQVLNDFLRMKESREYTEETDTQRNVSRPVDRVS) is disordered. The span at 159 to 169 (EVLNSTTSSPA) shows a compositional bias: polar residues. Residues 180–189 (LRMKESREYT) show a composition bias toward basic and acidic residues. Low complexity predominate over residues 196 to 206 (RNVSRPVDRVS). One can recognise a Protein kinase domain in the interval 255-487 (FSDVNFLAEG…EGDSLSDTSL (233 aa)). Residues 261–269 (LAEGGYGSV) and K283 contribute to the ATP site. The segment covering 511-538 (DSSSSRSSSASSVLKSFSRTQHSSRSSS) has biased composition (low complexity). The tract at residues 511 to 567 (DSSSSRSSSASSVLKSFSRTQHSSRSSSNAGSPLNPAATQALAFKKYNKNTTRHTQD) is disordered. Positions 556–567 (KYNKNTTRHTQD) are enriched in basic residues.

This is Inactive protein kinase SELMODRAFT_444075 from Selaginella moellendorffii (Spikemoss).